Reading from the N-terminus, the 382-residue chain is Beta-lactamase CMY-1 (382 aa).

An N-terminal signal peptide occupies residues 1–23 (MQQRQSILWGAVATLMWAGLAHA). Catalysis depends on Ser88, which acts as the Acyl-ester intermediate. Ser88, Gln144, Tyr174, Asn176, and Asn363 together coordinate a beta-lactam.

It belongs to the class-C beta-lactamase family.

The enzyme catalyses a beta-lactam + H2O = a substituted beta-amino acid. With respect to regulation, inhibited by the beta-lactamase-blocking agent sulbactam. In terms of biological role, class C beta-lactamase which confers resistance to penicillins and cephalosporins. Has benzylpenicillin- and cefalotin-hydrolyzing activities. Has weak cefuroxime, cefotaxime, cefoxitin, imipenem and oxacillin-hydrolyzing activities. The protein is Beta-lactamase CMY-1 of Klebsiella pneumoniae.